The sequence spans 256 residues: L-erythrulose-1-phosphate isomerase (256 aa).

The active-site Electrophile is the His-96. Glu-169 acts as the Proton acceptor in catalysis. 2 residues coordinate substrate: Gly-175 and Ser-212.

Belongs to the triosephosphate isomerase family. In terms of assembly, homodimer.

The protein localises to the cytoplasm. It catalyses the reaction L-erythrulose 1-phosphate = D-erythrulose 4-phosphate. Its pathway is carbohydrate metabolism; erythritol degradation. In terms of biological role, catalyzes the isomerization of D-erythrulose-4P to L-erythrulose-1P. Involved in the degradation pathway of erythritol, that allows B.abortus to grow on this compound as the sole carbon source. In Brucella abortus (strain 2308), this protein is L-erythrulose-1-phosphate isomerase.